The chain runs to 493 residues: Insulinoma-associated protein 2 (493 aa).

Positions 1-12 are enriched in basic residues; the sequence is MPRGFLVKRTKR. The segment at 1 to 20 is SNAG domain; it reads MPRGFLVKRTKRSGSSYRAR. A disordered region spans residues 1–77; it reads MPRGFLVKRT…PGPSPARPAG (77 aa). The C2H2-type 1; atypical zinc finger occupies 203 to 223; that stretch reads FICQLCKHQYADPFALAQHRC. The C2H2-type 2 zinc-finger motif lies at 231-253; sequence YRCPECDKVFSCPANLASHRRWH. Residues 248–310 are disordered; sequence SHRRWHKPRP…SGDGQHRDSA (63 aa). Positions 267 to 276 are enriched in pro residues; that stretch reads PHAPLTPPDP. Positions 283–294 are enriched in basic and acidic residues; it reads ENGRVPRTDDQH. 3 consecutive C2H2-type zinc fingers follow at residues 354-376, 398-420, and 452-475; these read FVCP…LGTH, FACP…RLWH, and FSCK…NKCH.

Expressed in spleen, stomach, liver, kidney and testis. In the pancreas, expressed in islet cells, including insulin-producing beta-cells, but not in acinar cells (at protein level). In the brain, expressed in the neuronal cells of the cerebral cortex, the Purkinje cells of the cerebellum and the hippocampal region including CA1 and CA3 (at protein level).

It is found in the cytoplasm. The protein resides in the nucleus. In terms of biological role, may function as a growth suppressor or tumor suppressor in liver cells and in certain neurons. The sequence is that of Insulinoma-associated protein 2 (Insm2) from Mus musculus (Mouse).